The following is a 633-amino-acid chain: Glutamyl-tRNA(Gln) amidotransferase subunit E (633 aa).

Belongs to the GatB/GatE family. GatE subfamily. In terms of assembly, heterodimer of GatD and GatE.

It catalyses the reaction L-glutamyl-tRNA(Gln) + L-glutamine + ATP + H2O = L-glutaminyl-tRNA(Gln) + L-glutamate + ADP + phosphate + H(+). Its function is as follows. Allows the formation of correctly charged Gln-tRNA(Gln) through the transamidation of misacylated Glu-tRNA(Gln) in organisms which lack glutaminyl-tRNA synthetase. The reaction takes place in the presence of glutamine and ATP through an activated gamma-phospho-Glu-tRNA(Gln). The GatDE system is specific for glutamate and does not act on aspartate. This Methanococcus vannielii (strain ATCC 35089 / DSM 1224 / JCM 13029 / OCM 148 / SB) protein is Glutamyl-tRNA(Gln) amidotransferase subunit E.